We begin with the raw amino-acid sequence, 401 residues long: Tyrosine--tRNA ligase (401 aa).

A 'HIGH' region motif is present at residues 42–51; sequence PTAPDLHLGH. The 'KMSKS' region motif lies at 226 to 230; that stretch reads KMSKS. Residue Lys229 participates in ATP binding. Residues 336–397 form the S4 RNA-binding domain; it reads IALAQLLKQI…GKRRIAKLSI (62 aa).

It belongs to the class-I aminoacyl-tRNA synthetase family. TyrS type 2 subfamily. Homodimer.

Its subcellular location is the cytoplasm. It carries out the reaction tRNA(Tyr) + L-tyrosine + ATP = L-tyrosyl-tRNA(Tyr) + AMP + diphosphate + H(+). Catalyzes the attachment of tyrosine to tRNA(Tyr) in a two-step reaction: tyrosine is first activated by ATP to form Tyr-AMP and then transferred to the acceptor end of tRNA(Tyr). This Legionella pneumophila (strain Lens) protein is Tyrosine--tRNA ligase.